Consider the following 335-residue polypeptide: Glycerol-3-phosphate dehydrogenase [NAD(P)+] (335 aa).

3 residues coordinate NADPH: S12, W13, and K107. Sn-glycerol 3-phosphate is bound by residues K107, G138, and S140. A142 lines the NADPH pocket. K193, D246, S256, R257, and N258 together coordinate sn-glycerol 3-phosphate. Residue K193 is the Proton acceptor of the active site. Residue R257 coordinates NADPH. NADPH is bound by residues V281 and E283.

Belongs to the NAD-dependent glycerol-3-phosphate dehydrogenase family.

Its subcellular location is the cytoplasm. The enzyme catalyses sn-glycerol 3-phosphate + NAD(+) = dihydroxyacetone phosphate + NADH + H(+). It catalyses the reaction sn-glycerol 3-phosphate + NADP(+) = dihydroxyacetone phosphate + NADPH + H(+). The protein operates within membrane lipid metabolism; glycerophospholipid metabolism. Functionally, catalyzes the reduction of the glycolytic intermediate dihydroxyacetone phosphate (DHAP) to sn-glycerol 3-phosphate (G3P), the key precursor for phospholipid synthesis. This is Glycerol-3-phosphate dehydrogenase [NAD(P)+] from Geobacter sulfurreducens (strain ATCC 51573 / DSM 12127 / PCA).